The chain runs to 305 residues: NAD kinase (305 aa).

The Proton acceptor role is filled by Asp88. NAD(+) is bound by residues 88-89 (DG), Arg93, 162-163 (NE), Lys173, Asn192, 203-208 (TAYSFS), and Gln262.

It belongs to the NAD kinase family. It depends on a divalent metal cation as a cofactor.

The protein resides in the cytoplasm. The catalysed reaction is NAD(+) + ATP = ADP + NADP(+) + H(+). Its function is as follows. Involved in the regulation of the intracellular balance of NAD and NADP, and is a key enzyme in the biosynthesis of NADP. Catalyzes specifically the phosphorylation on 2'-hydroxyl of the adenosine moiety of NAD to yield NADP. The sequence is that of NAD kinase from Tropheryma whipplei (strain TW08/27) (Whipple's bacillus).